The sequence spans 422 residues: Beta-1,3-galactosyltransferase 2 (422 aa).

Residues 1 to 20 (MLQWRRRHCCFAKMTWSPKR) are Cytoplasmic-facing. A helical; Signal-anchor for type II membrane protein membrane pass occupies residues 21–43 (SLLRTPLTGVLSLVFLFAMFLFF). Residues 44 to 422 (NHHDWLPGRP…AGRYRHRKLH (379 aa)) are Lumenal-facing. N-linked (GlcNAc...) asparagine glycans are attached at residues asparagine 75, asparagine 98, asparagine 119, asparagine 176, and asparagine 226. Positions 91-110 (LRPHTASNSSNTELSPQGVT) are disordered. Polar residues predominate over residues 95–110 (TASNSSNTELSPQGVT).

It belongs to the glycosyltransferase 31 family. Mn(2+) serves as cofactor. As to expression, detected in brain and heart.

The protein localises to the golgi apparatus membrane. The catalysed reaction is an N-acetyl-beta-D-glucosaminyl derivative + UDP-alpha-D-galactose = a beta-D-galactosyl-(1-&gt;3)-N-acetyl-beta-D-glucosaminyl derivative + UDP + H(+). It carries out the reaction a beta-D-GlcNAc-(1-&gt;3)-beta-D-Gal-(1-&gt;4)-beta-D-Glc-(1&lt;-&gt;1)-Cer(d18:1(4E)) + UDP-alpha-D-galactose = a beta-D-Gal-(1-&gt;3)-beta-D-GlcNAc-(1-&gt;3)-beta-D-Gal-(1-&gt;4)-beta-D-Glc-(1&lt;-&gt;1')-Cer(d18:1(4E)) + UDP + H(+). It catalyses the reaction a neolactoside IV(3)-beta-GlcNAc-nLc4Cer(d18:1(4E)) + UDP-alpha-D-galactose = a neolactoside IV(3)-beta-[Gal-beta-(1-&gt;3)-GlcNAc]-nLc4Cer(d18:1(4E)) + UDP + H(+). Its pathway is protein modification; protein glycosylation. Functionally, beta-1,3-galactosyltransferase that transfers galactose from UDP-galactose to substrates with a terminal beta-N-acetylglucosamine (beta-GlcNAc) residue. Can also utilize substrates with a terminal galactose residue, albeit with lower efficiency. Involved in the biosynthesis of the carbohydrate moieties of glycolipids and glycoproteins. This is Beta-1,3-galactosyltransferase 2 from Mus musculus (Mouse).